A 287-amino-acid polypeptide reads, in one-letter code: Large ribosomal subunit protein uL2 (287 aa).

The interval 221 to 287 is disordered; it reads RGSVMNPCDH…SKRSRGGRDS (67 aa). A compositionally biased stretch (basic residues) spans 258–287; the sequence is KTRKKNKPSNKLVVRRRRRISKRSRGGRDS.

The protein belongs to the universal ribosomal protein uL2 family. Part of the 50S ribosomal subunit. Forms a bridge to the 30S subunit in the 70S ribosome.

Its function is as follows. One of the primary rRNA binding proteins. Required for association of the 30S and 50S subunits to form the 70S ribosome, for tRNA binding and peptide bond formation. It has been suggested to have peptidyltransferase activity; this is somewhat controversial. Makes several contacts with the 16S rRNA in the 70S ribosome. In Prochlorococcus marinus (strain MIT 9312), this protein is Large ribosomal subunit protein uL2.